The following is a 239-amino-acid chain: Fatty acid metabolism regulator protein (239 aa).

An HTH gntR-type domain is found at 6–74 (QSPAGFAEEY…HGKPTKVNNF (69 aa)). The H-T-H motif DNA-binding region spans 34–53 (ERELSELIGVTRTTLREVLQ).

In terms of assembly, homodimer.

Its subcellular location is the cytoplasm. Its function is as follows. Multifunctional regulator of fatty acid metabolism. The chain is Fatty acid metabolism regulator protein from Yersinia pseudotuberculosis serotype O:1b (strain IP 31758).